A 277-amino-acid chain; its full sequence is Urease accessory protein UreD (277 aa).

Belongs to the UreD family. In terms of assembly, ureD, UreF and UreG form a complex that acts as a GTP-hydrolysis-dependent molecular chaperone, activating the urease apoprotein by helping to assemble the nickel containing metallocenter of UreC. The UreE protein probably delivers the nickel.

The protein localises to the cytoplasm. Its function is as follows. Required for maturation of urease via the functional incorporation of the urease nickel metallocenter. This is Urease accessory protein UreD from Pseudomonas putida (strain ATCC 47054 / DSM 6125 / CFBP 8728 / NCIMB 11950 / KT2440).